We begin with the raw amino-acid sequence, 56 residues long: UPF0291 protein Clos_1191 (56 aa).

This sequence belongs to the UPF0291 family.

It is found in the cytoplasm. This chain is UPF0291 protein Clos_1191, found in Alkaliphilus oremlandii (strain OhILAs) (Clostridium oremlandii (strain OhILAs)).